The sequence spans 440 residues: Serine hydroxymethyltransferase (440 aa).

123-125 contacts (6S)-5,6,7,8-tetrahydrofolate; sequence GHI. Residue Lys-238 is modified to N6-(pyridoxal phosphate)lysine.

It belongs to the SHMT family. As to quaternary structure, homodimer. Requires pyridoxal 5'-phosphate as cofactor.

The protein localises to the cytoplasm. The protein operates within amino-acid biosynthesis; glycine biosynthesis; glycine from L-serine: step 1/1. Its function is as follows. Catalyzes the reversible interconversion of serine and glycine with a modified folate serving as the one-carbon carrier. Also exhibits a pteridine-independent aldolase activity toward beta-hydroxyamino acids, producing glycine and aldehydes, via a retro-aldol mechanism. The sequence is that of Serine hydroxymethyltransferase from Nitrosopumilus maritimus (strain SCM1).